Reading from the N-terminus, the 366-residue chain is Box C/D snoRNA protein 1 (366 aa).

Residues Cys5, Cys8, Cys17, Cys20, Cys25, Cys29, His33, and Cys39 each contribute to the Zn(2+) site. The HIT-type zinc-finger motif lies at 5-39 (CGVCGIKEFKYKCPRCLVQTCSLECSKKHKTRDNC). The disordered stretch occupies residues 318 to 366 (DNAREEEDAEEDSQPTEEPVQKETQDASDSDSDSDDDYNPGLSMDFLTA). Acidic residues-rich tracts occupy residues 321–332 (REEEDAEEDSQP) and 343–355 (DASD…DDDY). The residue at position 330 (Ser330) is a Phosphoserine.

It belongs to the BCD1 family.

The protein localises to the nucleus. Required for box C/D snoRNAs accumulation involved in snoRNA processing, snoRNA transport to the nucleolus and ribosome biogenesis. In Saccharomyces cerevisiae (strain ATCC 204508 / S288c) (Baker's yeast), this protein is Box C/D snoRNA protein 1 (BCD1).